Reading from the N-terminus, the 93-residue chain is Acylphosphatase (93 aa).

The Acylphosphatase-like domain maps to 6 to 93 (RAIVTVKGLV…GEFDTFDVRY (88 aa)). Residues Arg-21 and Asn-39 contribute to the active site.

This sequence belongs to the acylphosphatase family.

The catalysed reaction is an acyl phosphate + H2O = a carboxylate + phosphate + H(+). This is Acylphosphatase (acyP) from Geobacter metallireducens (strain ATCC 53774 / DSM 7210 / GS-15).